We begin with the raw amino-acid sequence, 561 residues long: MTNPRHNIREIRSPRGPELNAKSWMTEAPLRMLMNNLDPDVAENPNELVVYGGIGRAARTWEDFDRIAATLKTLTEEETLLVQSGKPVGVFRTHKDAPRVLIANSNLVPHWATWDHFNELDKKGLAMYGQMTAGSWIYIGTQGIVQGTYETFVEAGRQHYNGSLKGKWILTGGLGGMGGAQPLAAVMAGACCLAVESDETRIDFRLRTRYVDEKATSLDEALAMIDKWTKAGEAKSVGLLGNAAEIFPELVKRMKAGGPRPDIVTDQTSAHDPLNGYLPLGWTVAEHKIKRESDPKAVEAAARASMKMHVEAMVAFWDAGVPTLDYGNNIRQVAKEEGFENAFAFPGFVPAYIRPLFCRGIGPFRWAALSGDPEDIYKTDAKVKELTPGNTHLHNWLDMARERIAFQGLPARICWVGLGDRERLGLAFNEMVKNGELKAPVVIGRDHLDSGSVASPNRETEAMKDGSDAVSDWPLLNALLNTASGATWVSLHHGGGVGMGFSQHSGMVICADGTDDAARRIERVLWNDPATGVMRHADAGYDIALDCAKDKGLRLPGILGN.

Residues 52-53, Q130, 176-178, E196, R201, 242-243, 267-271, 277-278, and Y326 contribute to the NAD(+) site; these read GG, GMG, NA, QTSAH, and YL. Residue C414 is part of the active site. G496 is an NAD(+) binding site.

It belongs to the urocanase family. NAD(+) is required as a cofactor.

The protein localises to the cytoplasm. It carries out the reaction 4-imidazolone-5-propanoate = trans-urocanate + H2O. Its pathway is amino-acid degradation; L-histidine degradation into L-glutamate; N-formimidoyl-L-glutamate from L-histidine: step 2/3. Catalyzes the conversion of urocanate to 4-imidazolone-5-propionate. This Rhizobium rhizogenes (strain K84 / ATCC BAA-868) (Agrobacterium radiobacter) protein is Urocanate hydratase.